We begin with the raw amino-acid sequence, 482 residues long: MVDFPGYNLSGAVASFLFILLTMKQSEDFRVIGPAHPILAGVGEDALLTCQLLPKRTTMHVEVRWYRSEPSTPVFVHRDGVEVTEMQMEEYRGWVEWIENGIAKGNVALKIHNIQPSDNGQYWCHFQDGNYCGETSLLLKVAGLGSAPSIHMEGPGESGVQLVCTARGWFPEPQVYWEDIRGEKLLAVSEHRIQDKDGLFYAEATLVVRNASAESVSCLVHNPVLTEEKGSVISLPEKLQTELASLKVNGPSQPILVRVGEDIQLTCYLSPKANAQSMEVRWDRSHRYPAVHVYMDGDHVAGEQMAEYRGRTVLVSDAIDEGRLTLQILSARPSDDGQYRCLFEKDDVYQEASLDLKVVSLGSSPLITVEGQEDGEMQPMCSSDGWFPQPHVPWRDMEGKTIPSSSQALTQGSHGLFHVQTLLRVTNISAVDVTCSISIPFLGEEKIATFSLSESRMTFLWKTLLVWGLLLAVAVGLPRKRS.

At 1 to 6 (MVDFPG) the chain is on the cytoplasmic side. The chain crosses the membrane as a helical; Signal-anchor for type II membrane protein span at residues 7–23 (YNLSGAVASFLFILLTM). Residues 24–482 (KQSEDFRVIG…VAVGLPRKRS (459 aa)) lie on the Extracellular side of the membrane. Ig-like V-type domains lie at 29–140 (FRVI…LLLK), 142–234 (AGLG…SVIS), and 236–355 (PEKL…ASLD). 3 disulfides stabilise this stretch: Cys50–Cys124, Cys164–Cys218, and Cys267–Cys341. N-linked (GlcNAc...) asparagine glycosylation occurs at Asn210. Asn427 carries N-linked (GlcNAc...) asparagine glycosylation.

It belongs to the immunoglobulin superfamily. BTN/MOG family. Expressed in brain, heart, kidney, liver, pancreas, ovary, leukocyte, small intestine, testis and thymus.

It is found in the membrane. In terms of biological role, negative regulator of T-cell proliferation. This chain is Butyrophilin-like protein 2, found in Homo sapiens (Human).